Consider the following 425-residue polypeptide: MESNCGHPMLSVSSAMYTFLLGAIFITLSSSRILLVKYSANEENKYDYLPTTVNVCSELVKLVFCALVSFWVLKKEDHQNRKLRCGSWKEFFNFMKWSIPAFLYFLDNLIVFYVLSYLQPAMAVIFSNFSIITTALLFRIVLKRHLNGIQWASLLILFLSIVALTSGTETSQHSLAGHGFHHDALFSPSNSCLLFRSECPRKDNCTAKEWTFSEAQWNTTARVFSHIRLGLGHVLIIVQCFISSMANIYNEKILKEGNQLTESIFVQNSKLYFFGVLFNGLTLGLQSGNRDQIKNCGIFYGHNAFSVALIFVTAFQGLSVAFILKFLDNMFHVLMAQVTTVVITTVSVLVFDFRPSLEFFLEAPSVLLSILIYNASNPQGVENVPRKERIRDLSGTLWERSSGDGEELERLTKPKSDIESDEDTF.

The Cytoplasmic portion of the chain corresponds to 1 to 7; that stretch reads MESNCGH. Residues 8 to 28 form a helical membrane-spanning segment; it reads PMLSVSSAMYTFLLGAIFITL. Topologically, residues 29 to 52 are lumenal; it reads SSSRILLVKYSANEENKYDYLPTT. Residues 53-73 traverse the membrane as a helical segment; it reads VNVCSELVKLVFCALVSFWVL. The Cytoplasmic segment spans residues 74 to 92; it reads KKEDHQNRKLRCGSWKEFF. Residues 93–115 form a helical membrane-spanning segment; that stretch reads NFMKWSIPAFLYFLDNLIVFYVL. Residues 116 to 119 are Lumenal-facing; it reads SYLQ. Residues 120–142 traverse the membrane as a helical segment; it reads PAMAVIFSNFSIITTALLFRIVL. The Cytoplasmic segment spans residues 143-147; the sequence is KRHLN. Residues 148–168 form a helical membrane-spanning segment; sequence GIQWASLLILFLSIVALTSGT. Residues 169–228 are Lumenal-facing; it reads ETSQHSLAGHGFHHDALFSPSNSCLLFRSECPRKDNCTAKEWTFSEAQWNTTARVFSHIR. N-linked (GlcNAc...) asparagine glycosylation is found at Asn204 and Asn218. A helical membrane pass occupies residues 229–249; the sequence is LGLGHVLIIVQCFISSMANIY. Over 250–263 the chain is Cytoplasmic; sequence NEKILKEGNQLTES. Residues 264-284 form a helical membrane-spanning segment; the sequence is IFVQNSKLYFFGVLFNGLTLG. Residues 285–303 are Lumenal-facing; that stretch reads LQSGNRDQIKNCGIFYGHN. The chain crosses the membrane as a helical span at residues 304 to 324; sequence AFSVALIFVTAFQGLSVAFIL. Topologically, residues 325–330 are cytoplasmic; it reads KFLDNM. A helical membrane pass occupies residues 331–351; the sequence is FHVLMAQVTTVVITTVSVLVF. At 352 to 354 the chain is on the lumenal side; the sequence is DFR. Residues 355 to 375 traverse the membrane as a helical segment; sequence PSLEFFLEAPSVLLSILIYNA. Residues 376–425 are Cytoplasmic-facing; that stretch reads SNPQGVENVPRKERIRDLSGTLWERSSGDGEELERLTKPKSDIESDEDTF. 3 positions are modified to phosphoserine: Ser394, Ser416, and Ser420. Residues 398–425 form a disordered region; the sequence is WERSSGDGEELERLTKPKSDIESDEDTF. A compositionally biased stretch (basic and acidic residues) spans 408–418; sequence LERLTKPKSDI.

Belongs to the nucleotide-sugar transporter family. SLC35A subfamily. As to quaternary structure, probably forms homooligomers and heterooligomers with SLC35A1, SLC35A2, SLC35A3 and SLC35A4.

It localises to the golgi apparatus membrane. It catalyses the reaction UMP(out) + UDP-alpha-D-glucuronate(in) = UMP(in) + UDP-alpha-D-glucuronate(out). It carries out the reaction UMP(out) + UDP-N-acetyl-alpha-D-glucosamine(in) = UMP(in) + UDP-N-acetyl-alpha-D-glucosamine(out). The enzyme catalyses UDP-N-acetyl-alpha-D-galactosamine(in) + UMP(out) = UDP-N-acetyl-alpha-D-galactosamine(out) + UMP(in). Probable UDP-sugar:UMP transmembrane antiporter involved in UDP-alpha-D-glucuronate/UDP-GlcA, UDP-GlcNAc/UDP-N-acetyl-alpha-D-glucosamine and UDP-N-acetyl-alpha-D-galactosamine/UDP-GalNAc transport from the cytosol to the lumen of the Golgi. The protein is UDP-sugar transporter protein SLC35A5 of Bos taurus (Bovine).